A 201-amino-acid chain; its full sequence is CASP-like protein 2A1 (201 aa).

A disordered region spans residues 1–27; it reads MEKRDKGSSPMATMMGSRDENEDVENT. Topologically, residues 1–30 are cytoplasmic; that stretch reads MEKRDKGSSPMATMMGSRDENEDVENTTRT. Residues 31 to 51 traverse the membrane as a helical segment; the sequence is AETMLRLVPMALCVSALVVML. The Extracellular segment spans residues 52 to 72; the sequence is KNTQTNDYGSLSYSDLGAFRY. The helical transmembrane segment at 73–93 threads the bilayer; sequence LVHVNGICAGYSLLSAVIVAM. Residues 94–101 lie on the Cytoplasmic side of the membrane; that stretch reads PRASTMPR. The chain crosses the membrane as a helical span at residues 102–122; the sequence is AWAFFLLDQVLTYVILAAGTV. The Extracellular portion of the chain corresponds to 123 to 152; sequence STEVLYLASKGDTTITWSEACVSFGGFCHK. The chain crosses the membrane as a helical span at residues 153 to 173; it reads ALISIVITFVVVICYAALSLL. Residues 174-201 are Cytoplasmic-facing; the sequence is SSYKLFSKYDSPVLTYPGKGIEIATFHG.

The protein belongs to the Casparian strip membrane proteins (CASP) family. Homodimer and heterodimers.

It is found in the cell membrane. The chain is CASP-like protein 2A1 from Populus trichocarpa (Western balsam poplar).